Reading from the N-terminus, the 116-residue chain is Methionine-R-sulfoxide reductase B1 (116 aa).

Residues 1-106 (MSFCSFFGGE…FSSSLKFVPK (106 aa)) enclose the MsrB domain. Zn(2+) contacts are provided by C23, C26, C71, and C74. The Nucleophile role is filled by U95. U95 is a non-standard amino acid (selenocysteine).

Belongs to the MsrB Met sulfoxide reductase family. The cofactor is Zn(2+). In terms of processing, truncated MSRB1/SEPX1 proteins produced by failed UGA/Sec decoding are ubiquitinated by some Cul2-RING E3 ubiquitin-protein ligase complexes (containing either PRAME, PRAMF6, PRAMF9 or FEM1C as substrate-recognition component).

The protein localises to the cytoplasm. It localises to the nucleus. Its subcellular location is the cytoskeleton. It catalyses the reaction L-methionyl-[protein] + [thioredoxin]-disulfide + H2O = L-methionyl-(R)-S-oxide-[protein] + [thioredoxin]-dithiol. It carries out the reaction [thioredoxin]-disulfide + L-methionine + H2O = L-methionine (R)-S-oxide + [thioredoxin]-dithiol. Functionally, methionine-sulfoxide reductase that specifically reduces methionine (R)-sulfoxide back to methionine. While in many cases, methionine oxidation is the result of random oxidation following oxidative stress, methionine oxidation is also a post-translational modification that takes place on specific residue. Acts as a regulator of actin assembly by reducing methionine (R)-sulfoxide mediated by MICALs (MICAL1, MICAL2 or MICAL3) on actin, thereby promoting filament repolymerization. Plays a role in innate immunity by reducing oxidized actin, leading to actin repolymerization in macrophages. In Homo sapiens (Human), this protein is Methionine-R-sulfoxide reductase B1 (MSRB1).